A 288-amino-acid chain; its full sequence is ATP synthase gamma chain (288 aa).

It belongs to the ATPase gamma chain family. In terms of assembly, F-type ATPases have 2 components, CF(1) - the catalytic core - and CF(0) - the membrane proton channel. CF(1) has five subunits: alpha(3), beta(3), gamma(1), delta(1), epsilon(1). CF(0) has three main subunits: a, b and c.

The protein resides in the cell membrane. In terms of biological role, produces ATP from ADP in the presence of a proton gradient across the membrane. The gamma chain is believed to be important in regulating ATPase activity and the flow of protons through the CF(0) complex. This chain is ATP synthase gamma chain, found in Shouchella clausii (strain KSM-K16) (Alkalihalobacillus clausii).